The chain runs to 445 residues: Phosphoglucosamine mutase (445 aa).

Ser-102 (phosphoserine intermediate) is an active-site residue. Residues Ser-102, Asp-241, Asp-243, and Asp-245 each coordinate Mg(2+). Position 102 is a phosphoserine (Ser-102).

The protein belongs to the phosphohexose mutase family. It depends on Mg(2+) as a cofactor. Post-translationally, activated by phosphorylation.

It catalyses the reaction alpha-D-glucosamine 1-phosphate = D-glucosamine 6-phosphate. Catalyzes the conversion of glucosamine-6-phosphate to glucosamine-1-phosphate. This is Phosphoglucosamine mutase from Haemophilus influenzae (strain ATCC 51907 / DSM 11121 / KW20 / Rd).